The primary structure comprises 344 residues: DNA fragmentation factor subunit beta (344 aa).

The CIDE-N domain occupies 7 to 83 (QPKCVKLRAL…LLTAGETWHG (77 aa)).

As to quaternary structure, heterodimer of DFFA and DFFB. Interacts with H1-1.

It localises to the cytoplasm. The protein resides in the nucleus. Its activity is regulated as follows. Inhibited by DFFA (DFF45). Nuclease that induces DNA fragmentation and chromatin condensation during apoptosis. Degrades naked DNA and induces apoptotic morphology. The protein is DNA fragmentation factor subunit beta (Dffb) of Mus musculus (Mouse).